A 373-amino-acid chain; its full sequence is Type 2 DNA topoisomerase 6 subunit A (373 aa).

Residues 15–153 (QGDTLAKERL…FHMRPEEDGA (139 aa)) form the Topo IIA-type catalytic domain. The O-(5'-phospho-DNA)-tyrosine intermediate role is filled by tyrosine 110. The Mg(2+) site is built by glutamate 206 and aspartate 258.

It belongs to the TOP6A family. As to quaternary structure, homodimer. Heterotetramer of two Top6A and two Top6B chains. Requires Mg(2+) as cofactor.

It catalyses the reaction ATP-dependent breakage, passage and rejoining of double-stranded DNA.. Relaxes both positive and negative superturns and exhibits a strong decatenase activity. The chain is Type 2 DNA topoisomerase 6 subunit A from Methanosarcina acetivorans (strain ATCC 35395 / DSM 2834 / JCM 12185 / C2A).